A 95-amino-acid chain; its full sequence is MSDDNGSGNNCTTNHFLLYGSLGLGGLLLLLVIILFICLCGFSQRVKRLERNAQVSGQEPHYASLQQLPVSSSDITDMKEDLSTDYACIARSTPT.

A helical membrane pass occupies residues 22–42; sequence LGLGGLLLLLVIILFICLCGF. The residue at position 64 (Ser-64) is a Phosphoserine.

This sequence belongs to the LST1 family. Expressed in spleen and at lower levels in thymus and liver.

It is found in the membrane. Its function is as follows. Possible role in modulating immune responses. Has an inhibitory effect on lymphocyte proliferation. Induces morphological changes including production of filopodia and microspikes when overexpressed in a variety of cell types and may be involved in dendritic cell maturation. This chain is Leukocyte-specific transcript 1 protein (Lst1), found in Mus musculus (Mouse).